The following is a 458-amino-acid chain: Flavonol 3-O-glucosyltransferase F3GT2 (458 aa).

The active-site Proton acceptor is His20. His20 lines the an anthocyanidin pocket. Asp119 (charge relay) is an active-site residue. Thr141 lines the UDP-alpha-D-glucose pocket. His150 contributes to the an anthocyanidin binding site. The UDP-alpha-D-glucose site is built by Ala333, Gln335, His350, Trp353, Asn354, Ser355, and Glu358. Residue Gly373 participates in an anthocyanidin binding. Residues Asp374 and Gln375 each contribute to the UDP-alpha-D-glucose site.

It belongs to the UDP-glycosyltransferase family. As to expression, expressed in ovaries.

It catalyses the reaction a flavonol + UDP-alpha-D-glucose = a flavonol 3-O-beta-D-glucoside + UDP + H(+). It participates in flavonoid metabolism. In terms of biological role, catalyzes the glucosylation of quercetin. Preferentially uses UDP-glucose as sugar donor, but is also able to use UDP-gal and UDP-xyl. Is probably not required for the accumulation of anthocyanin in red-fleshed kiwifruit varieties. The sequence is that of Flavonol 3-O-glucosyltransferase F3GT2 from Actinidia chinensis var. chinensis (Chinese soft-hair kiwi).